The chain runs to 169 residues: MKLSVISAVFVSLAAAAAAKTTPTREVAAAAAVPDPVQDGIAKNCKTYYQAKPGDSCQKIVNDYGVFTFGDFFKWNPAVGKNCESLLGGWYYCVGVPGTPSKCTEKHPTPTQPGSACKCGQWYKVKKGDNCQALEKKFKISDKDFRKLNGGLNKECSNLQADVNVCVKA.

The signal sequence occupies residues 1 to 19 (MKLSVISAVFVSLAAAAAA). 2 consecutive LysM domains span residues 47-94 (TYYQ…YYCV) and 121-167 (QWYK…NVCV).

It belongs to the secreted LysM effector family.

Secreted effector that enables the plant pathogenic fungus to manipulate host defenses for successful infection. Required for the full virulence to infect insect hosts. Protects fungal hyphae against the hydrolytic activity of chitinase and plays an important role in evasion of insect immunities. Binds chitin and can additionally bind chitosan and cellulose. Coats and protects the cell walls of insect pathogens from host cell recognition and additionally shields fungal cells from the hydrolysis of insect chitinases. In Beauveria bassiana (strain ARSEF 2860) (White muscardine disease fungus), this protein is Secreted LysM effector Blys5.